The chain runs to 340 residues: Organic solute transporter subunit alpha (340 aa).

Over 1-52 (MEPDRTQIRLDPRYTADLLEILKTNYSVPSACFSYPPTAAQLLRALGPVDIS) the chain is Extracellular. N-linked (GlcNAc...) asparagine glycosylation occurs at N25. The chain crosses the membrane as a helical span at residues 53–73 (LMVIMTLFVLGSIAIFLEAAV). Over 74 to 87 (YLHKNTRCPIKRKT) the chain is Cytoplasmic. The helical transmembrane segment at 88-108 (LIWCSSSPTIVSAFSCFGLWI) threads the bilayer. Over 109–110 (PR) the chain is Extracellular. Residues 111 to 131 (ALTLVEMAITTFYSMCFYLLM) traverse the membrane as a helical segment. The Cytoplasmic portion of the chain corresponds to 132–186 (QAMVEGFGGKEAVLRTLKDTPVMIHTGPCCCCCPCCPRIKITRKRLQLLLLGPIQ). A helical membrane pass occupies residues 187–207 (YAFFKISLTLVGLFLIPDGIF). The Extracellular portion of the chain corresponds to 208–219 (DPSDISEGSTAL). A helical transmembrane segment spans residues 220 to 240 (WINTFLGVSTLSALWTIGIIF). Topologically, residues 241–255 (RQARLHLGEQNIGAK) are cytoplasmic. A helical membrane pass occupies residues 256-276 (FVLFQALLILSALQPSIFSVL). The Extracellular segment spans residues 277-295 (ASGGQIACSPPFSSKIRSQ). The helical transmembrane segment at 296–316 (VMNCHLLILESFLITVLTRIY) threads the bilayer. The Cytoplasmic segment spans residues 317-340 (YRRKDDKLGYEPFSSPDQDLNLKA). S330 carries the post-translational modification Phosphoserine.

This sequence belongs to the OST-alpha family. In terms of assembly, interacts with SLC51B. The Ost-alpha/Ost-beta complex is a heterodimer composed of alpha (SLC51A) and beta (SLC51B) subunit.

Its subcellular location is the cell membrane. The protein resides in the endoplasmic reticulum membrane. The enzyme catalyses taurocholate(out) = taurocholate(in). It carries out the reaction estrone 3-sulfate(out) = estrone 3-sulfate(in). It catalyses the reaction dehydroepiandrosterone 3-sulfate(out) = dehydroepiandrosterone 3-sulfate(in). The catalysed reaction is tauroursodeoxycholate(out) = tauroursodeoxycholate(in). The enzyme catalyses glycoursodeoxycholate(out) = glycoursodeoxycholate(in). It carries out the reaction glycocholate(out) = glycocholate(in). It catalyses the reaction taurochenodeoxycholate(out) = taurochenodeoxycholate(in). The catalysed reaction is glycochenodeoxycholate(out) = glycochenodeoxycholate(in). The enzyme catalyses taurodeoxycholate(out) = taurodeoxycholate(in). It carries out the reaction glycodeoxycholate(out) = glycodeoxycholate(in). It catalyses the reaction prostaglandin E2(out) = prostaglandin E2(in). Functionally, essential component of the Ost-alpha/Ost-beta complex, a heterodimer that acts as the intestinal basolateral transporter responsible for bile acid export from enterocytes into portal blood. Efficiently transports the major species of bile acids (taurocholate). Taurine conjugates are transported more efficiently across the basolateral membrane than glycine-conjugated bile acids. Can also transport steroids such as estrone 3-sulfate and dehydroepiandrosterone 3-sulfate, therefore playing a role in the enterohepatic circulation of sterols. Able to transport eicosanoids such as prostaglandin E2. This chain is Organic solute transporter subunit alpha (SLC51A), found in Bos taurus (Bovine).